A 701-amino-acid polypeptide reads, in one-letter code: Glycine--tRNA ligase beta subunit (701 aa).

It belongs to the class-II aminoacyl-tRNA synthetase family. As to quaternary structure, tetramer of two alpha and two beta subunits.

The protein resides in the cytoplasm. The enzyme catalyses tRNA(Gly) + glycine + ATP = glycyl-tRNA(Gly) + AMP + diphosphate. The polypeptide is Glycine--tRNA ligase beta subunit (Bradyrhizobium sp. (strain BTAi1 / ATCC BAA-1182)).